A 34-amino-acid chain; its full sequence is Photosystem II reaction center protein M (34 aa).

A helical membrane pass occupies residues 5–25 (ILAFIATVLFILVPTAFLLII).

It belongs to the PsbM family. PSII is composed of 1 copy each of membrane proteins PsbA, PsbB, PsbC, PsbD, PsbE, PsbF, PsbH, PsbI, PsbJ, PsbK, PsbL, PsbM, PsbT, PsbX, PsbY, PsbZ, Psb30/Ycf12, at least 3 peripheral proteins of the oxygen-evolving complex and a large number of cofactors. It forms dimeric complexes.

Its subcellular location is the plastid. The protein resides in the chloroplast thylakoid membrane. In terms of biological role, one of the components of the core complex of photosystem II (PSII). PSII is a light-driven water:plastoquinone oxidoreductase that uses light energy to abstract electrons from H(2)O, generating O(2) and a proton gradient subsequently used for ATP formation. It consists of a core antenna complex that captures photons, and an electron transfer chain that converts photonic excitation into a charge separation. This subunit is found at the monomer-monomer interface. This is Photosystem II reaction center protein M from Piper cenocladum (Ant piper).